Reading from the N-terminus, the 328-residue chain is Acyl-CoA wax alcohol acyltransferase 1 (328 aa).

A run of 2 helical transmembrane segments spans residues S12 to L32 and I34 to L53.

This sequence belongs to the diacylglycerol acyltransferase family.

Its subcellular location is the endoplasmic reticulum membrane. The enzyme catalyses a long chain fatty alcohol + a fatty acyl-CoA = a wax ester + CoA. The catalysed reaction is 1,2-di-(9Z-octadecenoyl)-sn-glycerol + (9Z)-octadecenoyl-CoA = 1,2,3-tri-(9Z-octadecenoyl)-glycerol + CoA. It catalyses the reaction hexadecan-1-ol + (9Z)-octadecenoyl-CoA = hexadecanyl (9Z)-octadecenoate + CoA. It carries out the reaction decan-1-ol + (9Z)-octadecenoyl-CoA = 1-O-decyl-(9Z)-octadecenoate + CoA. The enzyme catalyses (9Z)-hexadecen-1-ol + (9Z)-octadecenoyl-CoA = 1-O-(9Z)-hexadecenyl (9Z)-octadecenoate + CoA. The catalysed reaction is octadecan-1-ol + (9Z)-octadecenoyl-CoA = 1-O-octadecyl (9Z)-octadecenoate + CoA. It catalyses the reaction (9Z)-octadecen-1-ol + (9Z)-octadecenoyl-CoA = 1-O-(9Z)-octadecenyl (9Z)-octadecenoate + CoA. It carries out the reaction hexadecan-1-ol + hexadecanoyl-CoA = hexadecanyl hexadecanoate + CoA. The enzyme catalyses hexadecan-1-ol + (9Z)-hexadecenoyl-CoA = 1-O-hexadecyl (9Z)-hexadecenoate + CoA. The catalysed reaction is hexadecan-1-ol + octadecanoyl-CoA = hexadecanyl octadecanoate + CoA. It catalyses the reaction eicosan-1-ol + (9Z)-octadecenoyl-CoA = 1-O-eicosanyl (9Z)-octadecenoate + CoA. Its function is as follows. Acyltransferase that catalyzes the formation of ester bonds between fatty alcohols and fatty acyl-CoAs to form wax monoesters. Shows a strong preference for decyl alcohol (C10), with less activity towards C16 and C18 alcohols. Shows a strong preference for saturated acyl-CoAs. This chain is Acyl-CoA wax alcohol acyltransferase 1 (Awat1), found in Mus musculus (Mouse).